A 688-amino-acid polypeptide reads, in one-letter code: Translation initiation factor IF-2 (688 aa).

Basic and acidic residues-rich tracts occupy residues Gly-53 to Glu-62 and Lys-86 to Asn-95. Positions Gly-53–Glu-100 are disordered. In terms of domain architecture, tr-type G spans Lys-187 to Glu-354. A G1 region spans residues Gly-196 to Thr-203. Gly-196–Thr-203 serves as a coordination point for GTP. The interval Gly-221–His-225 is G2. Residues Asp-242 to Gly-245 form a G3 region. Residues Asp-242 to His-246 and Asn-296 to Asp-299 contribute to the GTP site. Residues Asn-296–Asp-299 form a G4 region. The interval Ser-332 to His-334 is G5.

Belongs to the TRAFAC class translation factor GTPase superfamily. Classic translation factor GTPase family. IF-2 subfamily.

It localises to the cytoplasm. Its function is as follows. One of the essential components for the initiation of protein synthesis. Protects formylmethionyl-tRNA from spontaneous hydrolysis and promotes its binding to the 30S ribosomal subunits. Also involved in the hydrolysis of GTP during the formation of the 70S ribosomal complex. The chain is Translation initiation factor IF-2 from Clostridium botulinum (strain Loch Maree / Type A3).